Reading from the N-terminus, the 48-residue chain is Light-harvesting polypeptide B-885 beta-1 chain (48 aa).

The Cytoplasmic portion of the chain corresponds to 1–20 (AEDRKSLSGLTEQEAQEFGT). The chain crosses the membrane as a helical span at residues 21 to 43 (LYTQGVAFVAVIAVVAHALVWAW). Histidine 37 contacts a bacteriochlorophyll. Topologically, residues 44–48 (RPWLQ) are periplasmic.

Belongs to the antenna complex beta subunit family. The core complex is formed by different alpha and beta chains, binding bacteriochlorophyll molecules, and arranged most probably in tetrameric structures disposed around the reaction center. The non-pigmented gamma chains may constitute additional components.

Its subcellular location is the cell inner membrane. Antenna complexes are light-harvesting systems, which transfer the excitation energy to the reaction centers. This chain is Light-harvesting polypeptide B-885 beta-1 chain, found in Rhodocyclus tenuis (Rhodospirillum tenue).